Consider the following 676-residue polypeptide: F420-dependent formate dehydrogenase 2 subunit alpha (676 aa).

Residues 4–60 form the 4Fe-4S Mo/W bis-MGD-type domain; it reads FKVVHTICPYCGTGCGIDLVVKDGKVVDSHPFKRHPVNEGKVCIKGNYCYEFVHSED. [4Fe-4S] cluster is bound by residues C11, C14, C18, and C46. U133 is a non-standard amino acid (selenocysteine).

It belongs to the prokaryotic molybdopterin-containing oxidoreductase family. As to quaternary structure, dimer of an alpha (FdhA2) and a beta (FdhB2) subunit. The cofactor is [4Fe-4S] cluster. Mo-bis(molybdopterin guanine dinucleotide) is required as a cofactor. It depends on Zn(2+) as a cofactor.

It carries out the reaction oxidized coenzyme F420-(gamma-L-Glu)(n) + formate + 2 H(+) = reduced coenzyme F420-(gamma-L-Glu)(n) + CO2. Its function is as follows. Catalyzes the oxidation of formate to carbon dioxide, with coenzyme F420 as the electron acceptor. In vitro can also use methyl viologen as electron acceptor. The sequence is that of F420-dependent formate dehydrogenase 2 subunit alpha from Methanococcus maripaludis (strain DSM 14266 / JCM 13030 / NBRC 101832 / S2 / LL).